A 368-amino-acid chain; its full sequence is 3-dehydroquinate synthase (368 aa).

NAD(+) is bound by residues 71–76 (DGESFK), 105–109 (GVIGD), 129–130 (TT), Lys-142, Lys-151, and 169–172 (TLRT). 3 residues coordinate Zn(2+): Glu-184, His-247, and His-264.

Belongs to the sugar phosphate cyclases superfamily. Dehydroquinate synthase family. Requires Co(2+) as cofactor. The cofactor is Zn(2+). It depends on NAD(+) as a cofactor.

It localises to the cytoplasm. It catalyses the reaction 7-phospho-2-dehydro-3-deoxy-D-arabino-heptonate = 3-dehydroquinate + phosphate. It functions in the pathway metabolic intermediate biosynthesis; chorismate biosynthesis; chorismate from D-erythrose 4-phosphate and phosphoenolpyruvate: step 2/7. In terms of biological role, catalyzes the conversion of 3-deoxy-D-arabino-heptulosonate 7-phosphate (DAHP) to dehydroquinate (DHQ). The sequence is that of 3-dehydroquinate synthase from Ralstonia pickettii (strain 12J).